The sequence spans 169 residues: Crossover junction endodeoxyribonuclease RuvC (169 aa).

Active-site residues include Asp11, Glu71, and Asp143. Residues Asp11, Glu71, and Asp143 each contribute to the Mg(2+) site.

This sequence belongs to the RuvC family. Homodimer which binds Holliday junction (HJ) DNA. The HJ becomes 2-fold symmetrical on binding to RuvC with unstacked arms; it has a different conformation from HJ DNA in complex with RuvA. In the full resolvosome a probable DNA-RuvA(4)-RuvB(12)-RuvC(2) complex forms which resolves the HJ. It depends on Mg(2+) as a cofactor.

It is found in the cytoplasm. The catalysed reaction is Endonucleolytic cleavage at a junction such as a reciprocal single-stranded crossover between two homologous DNA duplexes (Holliday junction).. The RuvA-RuvB-RuvC complex processes Holliday junction (HJ) DNA during genetic recombination and DNA repair. Endonuclease that resolves HJ intermediates. Cleaves cruciform DNA by making single-stranded nicks across the HJ at symmetrical positions within the homologous arms, yielding a 5'-phosphate and a 3'-hydroxyl group; requires a central core of homology in the junction. The consensus cleavage sequence is 5'-(A/T)TT(C/G)-3'. Cleavage occurs on the 3'-side of the TT dinucleotide at the point of strand exchange. HJ branch migration catalyzed by RuvA-RuvB allows RuvC to scan DNA until it finds its consensus sequence, where it cleaves and resolves the cruciform DNA. The protein is Crossover junction endodeoxyribonuclease RuvC of Bartonella henselae (strain ATCC 49882 / DSM 28221 / CCUG 30454 / Houston 1) (Rochalimaea henselae).